Consider the following 201-residue polypeptide: Probable nicotinate-nucleotide adenylyltransferase (201 aa).

It belongs to the NadD family.

It carries out the reaction nicotinate beta-D-ribonucleotide + ATP + H(+) = deamido-NAD(+) + diphosphate. It participates in cofactor biosynthesis; NAD(+) biosynthesis; deamido-NAD(+) from nicotinate D-ribonucleotide: step 1/1. Catalyzes the reversible adenylation of nicotinate mononucleotide (NaMN) to nicotinic acid adenine dinucleotide (NaAD). This Clostridium botulinum (strain Okra / Type B1) protein is Probable nicotinate-nucleotide adenylyltransferase.